A 705-amino-acid chain; its full sequence is p-hydroxybenzoic acid--AMP ligase FadD22 (705 aa).

The region spanning 541-619 (ERQRLVVDAV…GLAQYLEAEL (79 aa)) is the Carrier domain. The residue at position 579 (serine 579) is an O-(pantetheine 4'-phosphoryl)serine.

The protein belongs to the ATP-dependent AMP-binding enzyme family.

The enzyme catalyses holo-[4-hydroxyphenylalkanoate synthase] + 4-hydroxybenzoate + ATP = 4-hydroxyphenyl-[4-hydroxyphenylalkanoate synthase] + AMP + diphosphate. It participates in lipid metabolism; fatty acid biosynthesis. Catalyzes the adenylation of p-hydroxybenzoic acid (pHBA) to form p-hydroxybenzoic acid-AMP (pHBA-AMP), which is converted directly to p-hydroxybenzoyl-S-FadD22 (pHBA-S-FAdD22) thioester intermediate in a CoA-independent manner by attack of the phosphopantetheine thiol of FadD22. Usually, this intermediate primes the biosynthesis of the phenolphthiocerol (PPOL) by presenting the pHBA starter unit for elongation by Pks15/1, but M.tuberculosis lacks Pks15/1 due to a natural frameshift and thus is unable to produce PPOL. This is p-hydroxybenzoic acid--AMP ligase FadD22 (fadD22) from Mycobacterium tuberculosis (strain CDC 1551 / Oshkosh).